Reading from the N-terminus, the 394-residue chain is Obg-like ATPase 1 (394 aa).

In terms of domain architecture, OBG-type G spans 25–282; that stretch reads LKIGIVGLPN…MPPDEAAKYC (258 aa). ATP-binding positions include 34 to 39, 56 to 60, and 94 to 97; these read NVGKST, FCTID, and DIAG. The Mg(2+) site is built by Ser38 and Thr58. Residue Phe129 participates in GTP binding. ATP is bound by residues 230–231, Met231, and 263–265; these read NM and SCA. 263–265 serves as a coordination point for GTP; the sequence is SCA. Residues 303–386 enclose the TGS domain; sequence HLIYFFTAGP…QDADIIFFKF (84 aa).

This sequence belongs to the TRAFAC class OBG-HflX-like GTPase superfamily. OBG GTPase family. YchF/OLA1 subfamily. In terms of assembly, monomer (Potential). Interacts with GAP1. Mg(2+) is required as a cofactor.

Its subcellular location is the cytoplasm. The protein resides in the cell membrane. The protein localises to the cytosol. Activated by GAP1. Hydrolyzes ATP, and can also hydrolyze GTP with lower efficiency. Has lower affinity for GTP (Potential). Exhibits GTPase activity. Exhibits similar binding affinities and hydrolytic activities toward both GTP and ATP. Binds to the 26 S ribosomal RNA in vitro, but not to the 5.8 S or 18 S rRNA. Confers sensitivity to salinity stress by suppressing the anti-oxidation enzymatic activities and increasing lipid peroxidation thus leading to the accumulation of reactive oxygen species (ROS). The polypeptide is Obg-like ATPase 1 (Oryza sativa subsp. indica (Rice)).